The sequence spans 469 residues: DNA-binding transcriptional regulator NtrC (469 aa).

A Response regulatory domain is found at 5 to 119 (IVWVVDDDSS…EAVALVERAI (115 aa)). Aspartate 54 bears the 4-aspartylphosphate mark. Residues 140 to 369 (MIGEAPAMQD…LENTCRWLTV (230 aa)) form the Sigma-54 factor interaction domain. Residues 168-175 (GESGTGKE) and 231-240 (ADGGTLFLDE) each bind ATP. Positions 445 to 464 (KQEAARLLGWGRNTLTRKLK) form a DNA-binding region, H-T-H motif.

Phosphorylated and dephosphorylated by NtrB.

The protein localises to the cytoplasm. In terms of biological role, member of the two-component regulatory system NtrB/NtrC, which controls expression of the nitrogen-regulated (ntr) genes in response to nitrogen limitation. Phosphorylated NtrC binds directly to DNA and stimulates the formation of open promoter-sigma54-RNA polymerase complexes. In Salmonella typhimurium (strain LT2 / SGSC1412 / ATCC 700720), this protein is DNA-binding transcriptional regulator NtrC (glnG).